The chain runs to 267 residues: Cell division protein FtsQ (267 aa).

At 1 to 32 the chain is on the cytoplasmic side; the sequence is MRQKTISNKNKQTKNTNNISLRRKLGLMYKKA. Residues 33-53 form a helical membrane-spanning segment; that stretch reads ILVLKIVLMIFVCLFVFTKYF. The Periplasmic segment spans residues 54-267; sequence TSIKTYLITN…DRNKYYIQKY (214 aa). One can recognise a POTRA domain in the interval 73-141; sequence FRLENVIIEG…NTVYIKLFER (69 aa).

This sequence belongs to the FtsQ/DivIB family. FtsQ subfamily.

It is found in the cell inner membrane. Essential cell division protein. The polypeptide is Cell division protein FtsQ (Rickettsia prowazekii (strain Madrid E)).